The following is a 376-amino-acid chain: Flap endonuclease 1 (376 aa).

The segment at 1–105 (MGIKGLSKLL…GELNKRKENA (105 aa)) is N-domain. Residue Asp34 coordinates Mg(2+). DNA-binding residues include Arg47 and Arg71. Residues Asp87, Glu159, Glu161, Asp180, and Asp182 each contribute to the Mg(2+) site. Positions 123 to 254 (QAKKLMKRTA…ITAFELIQQY (132 aa)) are I-domain. Glu159 is a binding site for DNA. Gly232 and Asp234 together coordinate DNA. Mg(2+) is bound at residue Asp234. The interaction with PCNA stretch occupies residues 336–344 (AQGRLDSFF). The interval 352–376 (SKSEAASGVKRKKPTTKAKESRKKK) is disordered. The segment covering 360-376 (VKRKKPTTKAKESRKKK) has biased composition (basic residues).

The protein belongs to the XPG/RAD2 endonuclease family. FEN1 subfamily. As to quaternary structure, interacts with PCNA. Three molecules of FEN1 bind to one PCNA trimer with each molecule binding to one PCNA monomer. PCNA stimulates the nuclease activity without altering cleavage specificity. It depends on Mg(2+) as a cofactor. Post-translationally, phosphorylated. Phosphorylation upon DNA damage induces relocalization to the nuclear plasma.

It is found in the nucleus. It localises to the nucleolus. The protein resides in the nucleoplasm. The protein localises to the mitochondrion. Its function is as follows. Structure-specific nuclease with 5'-flap endonuclease and 5'-3' exonuclease activities involved in DNA replication and repair. During DNA replication, cleaves the 5'-overhanging flap structure that is generated by displacement synthesis when DNA polymerase encounters the 5'-end of a downstream Okazaki fragment. It enters the flap from the 5'-end and then tracks to cleave the flap base, leaving a nick for ligation. Also involved in the long patch base excision repair (LP-BER) pathway, by cleaving within the apurinic/apyrimidinic (AP) site-terminated flap. Acts as a genome stabilization factor that prevents flaps from equilibrating into structures that lead to duplications and deletions. Also possesses 5'-3' exonuclease activity on nicked or gapped double-stranded DNA, and exhibits RNase H activity. Also involved in replication and repair of rDNA and in repairing mitochondrial DNA. This Entamoeba dispar (strain ATCC PRA-260 / SAW760) protein is Flap endonuclease 1.